A 230-amino-acid chain; its full sequence is MTTTSASTTDHLIDQQVIDGQAGYTKSFLNIYDLAVFKGTAPLAWHCSPAVSRQMYDTCLGANHVEIGVGTGYLLDNATFPVADPKITLVDLNPNSLAHTAQRLNRYDVTTVRANVLEPLPLEERAYDSVGMSYLLHCVPGSIKEKGIALKHAAAVVRPGGVVFGATVLSSGVPVSARGRWTMNYLNKRGDFHNQEDNYDDLRDQLAQYFPRFQLTSRGCVGIWRAWTTD.

Belongs to the methyltransferase superfamily.

The enzyme catalyses demethylluteothin + S-adenosyl-L-methionine = luteothin + S-adenosyl-L-homocysteine. The protein operates within antibiotic biosynthesis. It participates in polyketide biosynthesis. Functionally, methyltransferase involved in the biosynthesis of the antibiotic aureothin, a nitroaryl polyketide metabolite with antifungal, cytotoxic and insecticidal activities. Catalyzes the methylation of demethylluteothin to luteothin (also called deoxyaureothin). Is specific for its gamma-pyrone substrate, and does not act on the alpha-pyrone isomer. This chain is Demethylluteothin O-methyltransferase, found in Streptomyces thioluteus.